Reading from the N-terminus, the 494-residue chain is UPF0371 protein SPCG_0344 (494 aa).

It belongs to the UPF0371 family.

The sequence is that of UPF0371 protein SPCG_0344 from Streptococcus pneumoniae (strain CGSP14).